The sequence spans 319 residues: ADP-L-glycero-D-manno-heptose-6-epimerase (319 aa).

NADP(+) contacts are provided by residues 10-11 (FI), 31-32 (DD), Lys38, Lys53, and 75-79 (EGACS). Catalysis depends on Tyr139, which acts as the Proton acceptor. Lys143 contributes to the NADP(+) binding site. Residue Asn168 participates in substrate binding. Positions 169 and 177 each coordinate NADP(+). The active-site Proton acceptor is Lys177. Substrate contacts are provided by residues Ser179, His186, 200–203 (FEGA), Arg213, and Tyr281.

Belongs to the NAD(P)-dependent epimerase/dehydratase family. HldD subfamily. As to quaternary structure, homopentamer. NADP(+) serves as cofactor.

It catalyses the reaction ADP-D-glycero-beta-D-manno-heptose = ADP-L-glycero-beta-D-manno-heptose. Its pathway is nucleotide-sugar biosynthesis; ADP-L-glycero-beta-D-manno-heptose biosynthesis; ADP-L-glycero-beta-D-manno-heptose from D-glycero-beta-D-manno-heptose 7-phosphate: step 4/4. Its function is as follows. Catalyzes the interconversion between ADP-D-glycero-beta-D-manno-heptose and ADP-L-glycero-beta-D-manno-heptose via an epimerization at carbon 6 of the heptose. This chain is ADP-L-glycero-D-manno-heptose-6-epimerase, found in Aromatoleum aromaticum (strain DSM 19018 / LMG 30748 / EbN1) (Azoarcus sp. (strain EbN1)).